The primary structure comprises 103 residues: Large ribosomal subunit protein bL21 (103 aa).

This sequence belongs to the bacterial ribosomal protein bL21 family. As to quaternary structure, part of the 50S ribosomal subunit. Contacts protein L20.

Functionally, this protein binds to 23S rRNA in the presence of protein L20. The protein is Large ribosomal subunit protein bL21 of Yersinia enterocolitica serotype O:8 / biotype 1B (strain NCTC 13174 / 8081).